The sequence spans 443 residues: Probable D-serine dehydratase (443 aa).

N6-(pyridoxal phosphate)lysine is present on K118.

The protein belongs to the serine/threonine dehydratase family. DsdA subfamily. Requires pyridoxal 5'-phosphate as cofactor.

The enzyme catalyses D-serine = pyruvate + NH4(+). In Vibrio campbellii (strain ATCC BAA-1116), this protein is Probable D-serine dehydratase.